A 531-amino-acid chain; its full sequence is UDP-glucuronosyltransferase 1A5 (531 aa).

Positions 1-25 are cleaved as a signal peptide; the sequence is MGLHVTLQGLAGLLLLLYALPWAEG. N116, N131, N139, N293, and N431 each carry an N-linked (GlcNAc...) asparagine glycan. A helical membrane pass occupies residues 489-505; it reads VIGFLLAIVLTVVFIVY.

The protein belongs to the UDP-glycosyltransferase family. Homodimer. Homooligomer. Interacts with UGT1A1, UGT1A3, UGT1A4, UGT1A6, UGT1A7, UGT1A8, UGT1A9 and UGT1A10 to form heterodimers.

The protein localises to the endoplasmic reticulum membrane. The enzyme catalyses glucuronate acceptor + UDP-alpha-D-glucuronate = acceptor beta-D-glucuronoside + UDP + H(+). It catalyses the reaction zolasartan + UDP-alpha-D-glucuronate = zolarsartan-1-N-beta-D-glucuronide + UDP. UDP-glucuronosyltransferase (UGT) that catalyzes phase II biotransformation reactions in which lipophilic substrates are conjugated with glucuronic acid to increase the metabolite's water solubility, thereby facilitating excretion into either the urine or bile. Essential for the elimination and detoxification of drugs, xenobiotics and endogenous compounds. Involved in the glucuronidation of the AGTR1 angiotensin receptor antagonist zolarsatan, a drug which can inhibit the effect of angiotensin II. The polypeptide is UDP-glucuronosyltransferase 1A5 (Rattus norvegicus (Rat)).